Consider the following 339-residue polypeptide: Phenylalanine--tRNA ligase alpha subunit (339 aa).

Glu247 serves as a coordination point for Mg(2+).

This sequence belongs to the class-II aminoacyl-tRNA synthetase family. Phe-tRNA synthetase alpha subunit type 1 subfamily. Tetramer of two alpha and two beta subunits. It depends on Mg(2+) as a cofactor.

It localises to the cytoplasm. The catalysed reaction is tRNA(Phe) + L-phenylalanine + ATP = L-phenylalanyl-tRNA(Phe) + AMP + diphosphate + H(+). This is Phenylalanine--tRNA ligase alpha subunit from Deinococcus deserti (strain DSM 17065 / CIP 109153 / LMG 22923 / VCD115).